Reading from the N-terminus, the 73-residue chain is Serine rich endogenous peptide 1 (73 aa).

Residues 1–28 (MGMSGSSGLVHVLMLLLLLSILFHHTES) form the signal peptide. Residues 48–73 (YKPNTAVETPPSRSRRGGGGQNTGAD) form a disordered region. Residues 53–67 (AVETPPSRSRRGGGG) carry the SCOOP motif motif. The short motif at 59–61 (SRS) is the SxS motif essential for MIK2 binding element. The segment covering 64–73 (GGGGQNTGAD) has biased composition (gly residues).

Belongs to the serine rich endogenous peptide (SCOOP) phytocytokine family. Interacts with MIK2 (via extracellular leucine-rich repeat domain); this interaction triggers the formation of complex between MIK2 and the BAK1/SERK3 and SERK4 coreceptors, and subsequent BAK1 activation by phosphorylation. Mostly expressed in leaves and flowers, and, to a lower extent, in seedlings shoots.

Its subcellular location is the cell membrane. It localises to the secreted. It is found in the extracellular space. The protein resides in the apoplast. Its function is as follows. Brassicaceae-specific phytocytokine (plant endogenous peptide released into the apoplast) perceived by MIK2 in a BAK1/SERK3 and SERK4 coreceptors-dependent manner, that modulates various physiological and antimicrobial processes including growth prevention and reactive oxygen species (ROS) response regulation. This Arabidopsis thaliana (Mouse-ear cress) protein is Serine rich endogenous peptide 1.